A 600-amino-acid chain; its full sequence is UvrABC system protein C (600 aa).

The GIY-YIG domain maps to 15–92 (EKPGCYLMKD…IKKYQPYYNV (78 aa)). One can recognise a UVR domain in the interval 197–232 (TSVKQDLTTKMEKASENLEFERAAEIRDQLKYIEET).

It belongs to the UvrC family. In terms of assembly, interacts with UvrB in an incision complex.

Its subcellular location is the cytoplasm. In terms of biological role, the UvrABC repair system catalyzes the recognition and processing of DNA lesions. UvrC both incises the 5' and 3' sides of the lesion. The N-terminal half is responsible for the 3' incision and the C-terminal half is responsible for the 5' incision. The chain is UvrABC system protein C from Lactobacillus acidophilus (strain ATCC 700396 / NCK56 / N2 / NCFM).